The primary structure comprises 402 residues: Acetate kinase (402 aa).

Asparagine 13 serves as a coordination point for Mg(2+). Lysine 20 provides a ligand contact to ATP. Residue arginine 94 coordinates substrate. The Proton donor/acceptor role is filled by aspartate 151. Residues 211-215 (HLGNG), 285-287 (DFR), and 333-337 (GVGEN) each bind ATP. Residue glutamate 387 participates in Mg(2+) binding.

This sequence belongs to the acetokinase family. As to quaternary structure, homodimer. Requires Mg(2+) as cofactor. The cofactor is Mn(2+).

The protein resides in the cytoplasm. It catalyses the reaction acetate + ATP = acetyl phosphate + ADP. Its pathway is metabolic intermediate biosynthesis; acetyl-CoA biosynthesis; acetyl-CoA from acetate: step 1/2. Its function is as follows. Catalyzes the formation of acetyl phosphate from acetate and ATP. Can also catalyze the reverse reaction. This chain is Acetate kinase, found in Nocardia farcinica (strain IFM 10152).